Reading from the N-terminus, the 88-residue chain is Large ribosomal subunit protein bL27 (88 aa).

The segment at 1 to 24 (MAHKKGTGSTRNGRDSNAKRLGVK) is disordered.

It belongs to the bacterial ribosomal protein bL27 family.

The chain is Large ribosomal subunit protein bL27 from Synechococcus sp. (strain CC9605).